The primary structure comprises 89 residues: Large ribosomal subunit protein bL27 (89 aa).

Residues 1-21 (MAHKKSGGSSRNGRDSNPKYL) form a disordered region.

This sequence belongs to the bacterial ribosomal protein bL27 family.

The chain is Large ribosomal subunit protein bL27 from Hyphomonas neptunium (strain ATCC 15444).